We begin with the raw amino-acid sequence, 214 residues long: Outer membrane lipoprotein MapA (214 aa).

The N-terminal stretch at 1 to 17 (MFKKFLIFIVPILFLSA) is a signal peptide. Cys-18 is lipidated: N-palmitoyl cysteine. Residue Cys-18 is the site of S-diacylglycerol cysteine attachment.

The protein localises to the cell outer membrane. The sequence is that of Outer membrane lipoprotein MapA (mapA) from Campylobacter jejuni subsp. jejuni serotype O:6 (strain 81116 / NCTC 11828).